A 74-amino-acid polypeptide reads, in one-letter code: Toxin BmKaTx17 (74 aa).

A signal peptide spans 1–8 (LLMTGVES). The region spanning 10 to 72 (RDAYIAKNYN…KPIRIPGKCH (63 aa)) is the LCN-type CS-alpha/beta domain. 4 cysteine pairs are disulfide-bonded: Cys20–Cys71, Cys24–Cys44, Cys30–Cys54, and Cys34–Cys56. The propeptide at 73-74 (RR) is removed by a carboxypeptidase.

It belongs to the long (4 C-C) scorpion toxin superfamily. Sodium channel inhibitor family. Alpha subfamily. As to expression, expressed by the venom gland.

Its subcellular location is the secreted. Alpha toxins bind voltage-independently at site-3 of sodium channels (Nav) and inhibit the inactivation of the activated channels, thereby blocking neuronal transmission. This chain is Toxin BmKaTx17, found in Olivierus martensii (Manchurian scorpion).